Consider the following 128-residue polypeptide: Cyclic ether formation enzyme gkaZ (128 aa).

A signal peptide spans 1-36; the sequence is MTTARALSDGLAYLLACFNAFCIQAHLTSRFSPAFS. 2 consecutive transmembrane segments (helical) span residues 61 to 81 and 107 to 127; these read LRYM…LPGW and WLLH…AIYV.

The protein belongs to the cyclic ether formation enzyme xenC family.

It localises to the membrane. It participates in mycotoxin biosynthesis. Functionally, cyclic ether formation enzyme; part of the gene cluster that mediates the biosynthesis of GKK1032, fungal natural products containing a macrocyclic para-cyclophane connected to a decahydrofluorene ring system that show potent antitumor activities. Within the pathway, gkaZ functions synergistically with gkaB and gkaX to form the cyclophane. The pathway begins with the PKS-NRPS gkaA which, with the help of the trans-enoyl reductase gkaC, synthesizes the polyketide-tyrosyl acyl thioester product which can be reductively off-loaded by the terminal reductase (R) domain in gkaA. The alpha/beta hydrolase gkaG is then required to catalyze the subsequent Knoevenagel condensation that affords the 3-pyrrolin-2-one ring, whereas the three proteins gkaB, gkaX and gkaZ then function synergistically to form the cyclophane. The protein is Cyclic ether formation enzyme gkaZ of Penicillium citrinum.